Consider the following 138-residue polypeptide: Large ribosomal subunit protein uL16 (138 aa).

Over residues 1–13 (MLQPSRRKYRKEQ) the composition is skewed to basic residues. The interval 1 to 22 (MLQPSRRKYRKEQKGRNTGLAT) is disordered.

Belongs to the universal ribosomal protein uL16 family. As to quaternary structure, part of the 50S ribosomal subunit.

Functionally, binds 23S rRNA and is also seen to make contacts with the A and possibly P site tRNAs. This chain is Large ribosomal subunit protein uL16, found in Bordetella petrii (strain ATCC BAA-461 / DSM 12804 / CCUG 43448).